The following is a 141-amino-acid chain: ATP synthase epsilon chain (141 aa).

It belongs to the ATPase epsilon chain family. In terms of assembly, F-type ATPases have 2 components, CF(1) - the catalytic core - and CF(0) - the membrane proton channel. CF(1) has five subunits: alpha(3), beta(3), gamma(1), delta(1), epsilon(1). CF(0) has three main subunits: a, b and c.

The protein localises to the cell inner membrane. Its function is as follows. Produces ATP from ADP in the presence of a proton gradient across the membrane. The protein is ATP synthase epsilon chain of Aromatoleum aromaticum (strain DSM 19018 / LMG 30748 / EbN1) (Azoarcus sp. (strain EbN1)).